We begin with the raw amino-acid sequence, 335 residues long: Hsp90 co-chaperone Cdc37-like 1 (335 aa).

Residues 1–11 are compositionally biased toward pro residues; that stretch reads MEQPWPPPGPW. A disordered region spans residues 1–42; the sequence is MEQPWPPPGPWSFPRTGGETEEESDLDVSPSSSHYSPVPDGG. Residues 2–170 are self-association; it reads EQPWPPPGPW…YEQKIRHFGM (169 aa). The span at 27–40 shows a compositional bias: low complexity; the sequence is DVSPSSSHYSPVPD. Ser-32 and Ser-88 each carry phosphoserine. Residues 84 to 120 are a coiled coil; that stretch reads HNSESLDQEHAKAQTAVSELRQREEEWRQKEEALVQR. A self-association and interaction with Hsp90 region spans residues 147 to 276; sequence KTEDEDKSQS…ARVRLYAQSQ (130 aa). Positions 266–335 are interaction with Hsp70; the sequence is KARVRLYAQS…EDDDRMMDTV (70 aa). The segment at 277-335 is required for interaction with STIP1; sequence SFAPVTVENHAPHSGVGCIGSAEPLPQNPDSLQCCPPAPLCSVDSVVHKEDDDRMMDTV.

This sequence belongs to the CDC37 family. As to quaternary structure, self-associates. Forms complexes with Hsp70 and Hsp90. Interacts with CDC37, FKBP4, PPID and STIP1.

The protein localises to the cytoplasm. In terms of biological role, co-chaperone that binds to numerous proteins and promotes their interaction with Hsp70 and Hsp90. In Rattus norvegicus (Rat), this protein is Hsp90 co-chaperone Cdc37-like 1 (Cdc37l1).